Reading from the N-terminus, the 369-residue chain is Putative glutamate--cysteine ligase 2-1 (369 aa).

Belongs to the glutamate--cysteine ligase type 2 family. YbdK subfamily.

It catalyses the reaction L-cysteine + L-glutamate + ATP = gamma-L-glutamyl-L-cysteine + ADP + phosphate + H(+). In terms of biological role, ATP-dependent carboxylate-amine ligase which exhibits weak glutamate--cysteine ligase activity. In Rhodococcus jostii (strain RHA1), this protein is Putative glutamate--cysteine ligase 2-1.